The primary structure comprises 264 residues: uncharacterized protein (264 aa).

An NADP(+)-binding site is contributed by 13-20; it reads TGSTSGIG. Ser141 is a substrate binding site. Tyr154 functions as the Proton acceptor in the catalytic mechanism.

This sequence belongs to the short-chain dehydrogenases/reductases (SDR) family.

This is an uncharacterized protein from Bacillus subtilis (strain 168).